The following is a 281-amino-acid chain: Elongation factor 1-delta (281 aa).

N-acetylalanine is present on Ala-2. Residue Lys-17 is modified to N6-acetyllysine. A phosphoserine mark is found at Ser-37, Glu-40, Ser-44, and Ser-60. Thr-73 bears the Phosphothreonine mark. Residues 80–115 are leucine-zipper; it reads LVVRIASLEVENQSLRGVVQELQQAISKLEARLNVL. A phosphoserine mark is found at Ser-86, Asn-91, Leu-94, and Ser-106. An N6-acetyllysine modification is found at Lys-107. Lys-117 bears the N6-acetyllysine; alternate mark. At Lys-117 the chain carries N6-succinyllysine; alternate. A disordered region spans residues 118 to 172; that stretch reads SSPGHRATAPQTQHVSPMRQVEPPAKKPATPAEDDEDDDIDLFGSDNEEEDKEAA. Ser-119 is modified (phosphoserine). Thr-129 carries the post-translational modification Phosphothreonine. Ser-133 bears the Phosphoserine mark. Thr-147 carries the phosphothreonine modification. The span at 149-169 shows a compositional bias: acidic residues; sequence AEDDEDDDIDLFGSDNEEEDK. Phosphoserine; by CK2 is present on Ser-162. The segment at 173–281 is catalytic (GEF); the sequence is QLREERLRQY…SVDIAAFNKI (109 aa).

This sequence belongs to the EF-1-beta/EF-1-delta family. As to quaternary structure, EF-1 is composed of 4 subunits: alpha, beta, delta isoform 1, and gamma. Isoform 2 interacts with HSF1 and NFE2L2. Isoform 2 is specifically expressed in brain, cerebellum and testis.

Its subcellular location is the nucleus. Functionally, EF-1-beta and EF-1-delta stimulate the exchange of GDP bound to EF-1-alpha to GTP, regenerating EF-1-alpha for another round of transfer of aminoacyl-tRNAs to the ribosome. Regulates induction of heat-shock-responsive genes through association with heat shock transcription factors and direct DNA-binding at heat shock promoter elements (HSE). This Homo sapiens (Human) protein is Elongation factor 1-delta (EEF1D).